A 202-amino-acid chain; its full sequence is Imidazoleglycerol-phosphate dehydratase (202 aa).

Belongs to the imidazoleglycerol-phosphate dehydratase family.

It is found in the cytoplasm. It carries out the reaction D-erythro-1-(imidazol-4-yl)glycerol 3-phosphate = 3-(imidazol-4-yl)-2-oxopropyl phosphate + H2O. It functions in the pathway amino-acid biosynthesis; L-histidine biosynthesis; L-histidine from 5-phospho-alpha-D-ribose 1-diphosphate: step 6/9. The sequence is that of Imidazoleglycerol-phosphate dehydratase from Nocardioides sp. (strain ATCC BAA-499 / JS614).